A 195-amino-acid polypeptide reads, in one-letter code: Keratin-associated protein 4-11 (195 aa).

27 consecutive repeat copies span residues 5 to 9 (CCGSV), 24 to 28 (CCRPS), 29 to 33 (CCETT), 34 to 38 (CCRTT), 44 to 48 (CCVSS), 49 to 53 (CCRPQ), 54 to 58 (CCQSV), 59 to 63 (CCQPT), 64 to 68 (CCRPR), 69 to 73 (CCISS), 74 to 78 (CCRPS), 79 to 83 (CCVSS), 84 to 88 (CCKPQ), 89 to 93 (CCQSM), 94 to 98 (CCQPT), 99 to 103 (CCRPR), 104 to 108 (CCISS), 109 to 113 (CCRPS), 114 to 118 (CCVSS), 119 to 123 (CCRPQ), 124 to 128 (CCQSV), 129 to 133 (CCQPT), 134 to 138 (CCHPS), 144 to 148 (CCRPS), 149 to 153 (CCESS), 154 to 158 (CCRPC), and 159 to 163 (CCLRP). The tract at residues 5–163 (CCGSVCSHQG…CCRPCCCLRP (159 aa)) is 27 X 5 AA repeats of C-C-[GIKRQVHEL]-[SPTR]-[STVQRMC].

It belongs to the KRTAP type 4 family. In terms of assembly, interacts with hair keratins. Expressed in the hair follicles.

Functionally, in the hair cortex, hair keratin intermediate filaments are embedded in an interfilamentous matrix, consisting of hair keratin-associated proteins (KRTAP), which are essential for the formation of a rigid and resistant hair shaft through their extensive disulfide bond cross-linking with abundant cysteine residues of hair keratins. The matrix proteins include the high-sulfur and high-glycine-tyrosine keratins. The protein is Keratin-associated protein 4-11 (KRTAP4-11) of Homo sapiens (Human).